Here is a 492-residue protein sequence, read N- to C-terminus: Steroid 21-hydroxylase (492 aa).

Residues arginine 91 and lysine 120 each contribute to the heme b site. Arginine 231 contributes to the 17alpha-hydroxyprogesterone binding site. Residue arginine 231 participates in progesterone binding. Heme b-binding residues include histidine 363, arginine 424, and cysteine 426.

The protein belongs to the cytochrome P450 family. The cofactor is heme b.

The protein resides in the endoplasmic reticulum membrane. It localises to the microsome membrane. It carries out the reaction 17alpha-hydroxyprogesterone + reduced [NADPH--hemoprotein reductase] + O2 = 11-deoxycortisol + oxidized [NADPH--hemoprotein reductase] + H2O + H(+). The enzyme catalyses progesterone + reduced [NADPH--hemoprotein reductase] + O2 = 21-hydroxyprogesterone + oxidized [NADPH--hemoprotein reductase] + H2O + H(+). In terms of biological role, specifically catalyzes the 21-hydroxylation of steroids. Required for the adrenal synthesis of mineralocorticoids and glucocorticoids. In Felis catus (Cat), this protein is Steroid 21-hydroxylase (CYP21).